Consider the following 248-residue polypeptide: mRNA-decapping protein OPG122 (248 aa).

A Nudix hydrolase domain is found at 45-227; the sequence is HKRVSVSAIL…IAKYALDTAK (183 aa). Residues 125–147 carry the Nudix box motif; sequence GGIPKRGENVPECLSREIKEEVN.

It belongs to the Nudix hydrolase family. As to quaternary structure, interacts with the late transcription elongation factor VLTF-4/OPG110. Interacts with the late transcription factors VLTF-1. The cofactor is Mg(2+). It depends on Mn(2+) as a cofactor.

It localises to the host mitochondrion. Functionally, acts with RNA polymerase to initiate transcription from late gene promoters. The protein is mRNA-decapping protein OPG122 (OPG122) of Cynomys gunnisoni (Gunnison's prairie dog).